Consider the following 323-residue polypeptide: tRNA U34 carboxymethyltransferase (323 aa).

Carboxy-S-adenosyl-L-methionine is bound by residues lysine 91, tryptophan 105, lysine 110, glycine 130, 152–154 (DPT), 181–182 (IE), methionine 196, tyrosine 200, and arginine 315.

This sequence belongs to the class I-like SAM-binding methyltransferase superfamily. CmoB family. In terms of assembly, homotetramer.

It carries out the reaction carboxy-S-adenosyl-L-methionine + 5-hydroxyuridine(34) in tRNA = 5-carboxymethoxyuridine(34) in tRNA + S-adenosyl-L-homocysteine + H(+). Its function is as follows. Catalyzes carboxymethyl transfer from carboxy-S-adenosyl-L-methionine (Cx-SAM) to 5-hydroxyuridine (ho5U) to form 5-carboxymethoxyuridine (cmo5U) at position 34 in tRNAs. The protein is tRNA U34 carboxymethyltransferase of Salmonella arizonae (strain ATCC BAA-731 / CDC346-86 / RSK2980).